We begin with the raw amino-acid sequence, 77 residues long: Large ribosomal subunit protein uL24 (77 aa).

This sequence belongs to the universal ribosomal protein uL24 family. As to quaternary structure, part of the 50S ribosomal subunit.

Its function is as follows. One of two assembly initiator proteins, it binds directly to the 5'-end of the 23S rRNA, where it nucleates assembly of the 50S subunit. In terms of biological role, one of the proteins that surrounds the polypeptide exit tunnel on the outside of the subunit. This is Large ribosomal subunit protein uL24 from Sulfurovum sp. (strain NBC37-1).